Consider the following 168-residue polypeptide: Shikimate kinase (168 aa).

Position 12 to 17 (12 to 17 (GAGKST)) interacts with ATP. Serine 16 is a binding site for Mg(2+). The substrate site is built by aspartate 34, arginine 58, and glycine 80. An ATP-binding site is contributed by arginine 117. Arginine 136 contributes to the substrate binding site. Residue arginine 153 participates in ATP binding.

The protein belongs to the shikimate kinase family. As to quaternary structure, monomer. Mg(2+) serves as cofactor.

The protein resides in the cytoplasm. It carries out the reaction shikimate + ATP = 3-phosphoshikimate + ADP + H(+). The protein operates within metabolic intermediate biosynthesis; chorismate biosynthesis; chorismate from D-erythrose 4-phosphate and phosphoenolpyruvate: step 5/7. Functionally, catalyzes the specific phosphorylation of the 3-hydroxyl group of shikimic acid using ATP as a cosubstrate. The chain is Shikimate kinase from Rhodococcus jostii (strain RHA1).